Consider the following 73-residue polypeptide: Putative membrane protein insertion efficiency factor (73 aa).

Belongs to the UPF0161 family.

Its subcellular location is the cell inner membrane. Functionally, could be involved in insertion of integral membrane proteins into the membrane. The sequence is that of Putative membrane protein insertion efficiency factor from Rickettsia bellii (strain RML369-C).